Consider the following 137-residue polypeptide: Large ribosomal subunit protein uL14 (137 aa).

It belongs to the universal ribosomal protein uL14 family. In terms of assembly, component of the large ribosomal subunit. Mature ribosomes consist of a small (40S) and a large (60S) subunit. The 40S subunit contains about 32 different proteins and 1 molecule of RNA (18S). The 60S subunit contains 45 different proteins and 3 molecules of RNA (25S, 5.8S and 5S).

It is found in the cytoplasm. In terms of biological role, component of the ribosome, a large ribonucleoprotein complex responsible for the synthesis of proteins in the cell. The small ribosomal subunit (SSU) binds messenger RNAs (mRNAs) and translates the encoded message by selecting cognate aminoacyl-transfer RNA (tRNA) molecules. The large subunit (LSU) contains the ribosomal catalytic site termed the peptidyl transferase center (PTC), which catalyzes the formation of peptide bonds, thereby polymerizing the amino acids delivered by tRNAs into a polypeptide chain. The nascent polypeptides leave the ribosome through a tunnel in the LSU and interact with protein factors that function in enzymatic processing, targeting, and the membrane insertion of nascent chains at the exit of the ribosomal tunnel. The sequence is that of Large ribosomal subunit protein uL14 from Candida albicans (strain SC5314 / ATCC MYA-2876) (Yeast).